The following is a 349-amino-acid chain: DNA polymerase IV (349 aa).

The UmuC domain maps to 4-185 (IIHIDCDCFY…LPVAKLHGVG (182 aa)). Mg(2+)-binding residues include D8 and D103. Residue E104 is part of the active site.

This sequence belongs to the DNA polymerase type-Y family. As to quaternary structure, monomer. The cofactor is Mg(2+).

Its subcellular location is the cytoplasm. It carries out the reaction DNA(n) + a 2'-deoxyribonucleoside 5'-triphosphate = DNA(n+1) + diphosphate. Poorly processive, error-prone DNA polymerase involved in untargeted mutagenesis. Copies undamaged DNA at stalled replication forks, which arise in vivo from mismatched or misaligned primer ends. These misaligned primers can be extended by PolIV. Exhibits no 3'-5' exonuclease (proofreading) activity. May be involved in translesional synthesis, in conjunction with the beta clamp from PolIII. This is DNA polymerase IV from Pseudomonas paraeruginosa (strain DSM 24068 / PA7) (Pseudomonas aeruginosa (strain PA7)).